The sequence spans 1077 residues: Carbamoyl phosphate synthase large chain (1077 aa).

Residues 1-403 (MPKRTDIQSI…SLHKALRGLE (403 aa)) are carboxyphosphate synthetic domain. ATP is bound by residues arginine 129, arginine 169, glycine 175, glycine 176, glutamate 208, leucine 210, glutamate 215, glycine 241, isoleucine 242, histidine 243, glutamine 285, and glutamate 299. The ATP-grasp 1 domain maps to 133-328 (DKAMKSIGLE…IAKIAAKLAV (196 aa)). Mg(2+) is bound by residues glutamine 285, glutamate 299, and asparagine 301. The Mn(2+) site is built by glutamine 285, glutamate 299, and asparagine 301. Positions 404 to 553 (VGATGFDEMV…YSSYDDECEA (150 aa)) are oligomerization domain. The tract at residues 554 to 935 (NPTDKEKIMV…AYAKAELGCG (382 aa)) is carbamoyl phosphate synthetic domain. The region spanning 678-869 (QQAVDRLGLL…LAKIAARVMA (192 aa)) is the ATP-grasp 2 domain. The ATP site is built by arginine 714, arginine 753, leucine 755, glutamate 760, glycine 785, valine 786, histidine 787, serine 788, glutamine 828, and glutamate 840. 3 residues coordinate Mg(2+): glutamine 828, glutamate 840, and asparagine 842. The Mn(2+) site is built by glutamine 828, glutamate 840, and asparagine 842. Positions 936–1077 (NVYPEGGRAL…HAQVQASLKA (142 aa)) constitute an MGS-like domain. The segment at 936-1077 (NVYPEGGRAL…HAQVQASLKA (142 aa)) is allosteric domain.

This sequence belongs to the CarB family. In terms of assembly, composed of two chains; the small (or glutamine) chain promotes the hydrolysis of glutamine to ammonia, which is used by the large (or ammonia) chain to synthesize carbamoyl phosphate. Tetramer of heterodimers (alpha,beta)4. It depends on Mg(2+) as a cofactor. The cofactor is Mn(2+).

It carries out the reaction hydrogencarbonate + L-glutamine + 2 ATP + H2O = carbamoyl phosphate + L-glutamate + 2 ADP + phosphate + 2 H(+). The catalysed reaction is hydrogencarbonate + NH4(+) + 2 ATP = carbamoyl phosphate + 2 ADP + phosphate + 2 H(+). Its pathway is amino-acid biosynthesis; L-arginine biosynthesis; carbamoyl phosphate from bicarbonate: step 1/1. It participates in pyrimidine metabolism; UMP biosynthesis via de novo pathway; (S)-dihydroorotate from bicarbonate: step 1/3. In terms of biological role, large subunit of the glutamine-dependent carbamoyl phosphate synthetase (CPSase). CPSase catalyzes the formation of carbamoyl phosphate from the ammonia moiety of glutamine, carbonate, and phosphate donated by ATP, constituting the first step of 2 biosynthetic pathways, one leading to arginine and/or urea and the other to pyrimidine nucleotides. The large subunit (synthetase) binds the substrates ammonia (free or transferred from glutamine from the small subunit), hydrogencarbonate and ATP and carries out an ATP-coupled ligase reaction, activating hydrogencarbonate by forming carboxy phosphate which reacts with ammonia to form carbamoyl phosphate. The protein is Carbamoyl phosphate synthase large chain of Vibrio vulnificus (strain CMCP6).